The following is a 327-amino-acid chain: Aspartate--ammonia ligase (327 aa).

This sequence belongs to the class-II aminoacyl-tRNA synthetase family. AsnA subfamily.

The protein localises to the cytoplasm. The catalysed reaction is L-aspartate + NH4(+) + ATP = L-asparagine + AMP + diphosphate + H(+). It functions in the pathway amino-acid biosynthesis; L-asparagine biosynthesis; L-asparagine from L-aspartate (ammonia route): step 1/1. The sequence is that of Aspartate--ammonia ligase from Bacillus cereus (strain AH820).